The following is a 163-amino-acid chain: Photosystem II extrinsic protein V (163 aa).

The N-terminal stretch at 1-26 (MFRRLIGVVVATVLLTFQLIVGSATA) is a signal peptide. Heme c is bound by residues Cys-63, Cys-66, His-67, and His-118.

Belongs to the cytochrome c family. PsbV subfamily. In terms of assembly, PSII is composed of 1 copy each of membrane proteins PsbA, PsbB, PsbC, PsbD, PsbE, PsbF, PsbH, PsbI, PsbJ, PsbK, PsbL, PsbM, PsbT, PsbX, PsbY, PsbZ, Psb30/Ycf12, peripheral proteins PsbO, CyanoQ (PsbQ), PsbU, PsbV and a large number of cofactors. It forms dimeric complexes. Heme c is required as a cofactor.

It localises to the cellular thylakoid membrane. In terms of biological role, one of the extrinsic, lumenal subunits of photosystem II (PSII). PSII is a light-driven water plastoquinone oxidoreductase, using light energy to abstract electrons from H(2)O, generating a proton gradient subsequently used for ATP formation. The extrinsic proteins stabilize the structure of photosystem II oxygen-evolving complex (OEC), the ion environment of oxygen evolution and protect the OEC against heat-induced inactivation. Low-potential cytochrome c that plays a role in the OEC of PSII. In Trichormus variabilis (strain ATCC 29413 / PCC 7937) (Anabaena variabilis), this protein is Photosystem II extrinsic protein V.